A 113-amino-acid chain; its full sequence is Prostate and testis expressed protein 2 (113 aa).

The signal sequence occupies residues 1–26 (MLVLFLLGTVFLLCPYWGELHDPIKA). Residues 29–110 (IMCYECKKYH…CDHSNYCNLP (82 aa)) enclose the UPAR/Ly6 domain. Disulfide bonds link Cys31/Cys57, Cys34/Cys42, Cys49/Cys80, and Cys84/Cys101.

Belongs to the PATE family. As to expression, isoform 1 and isoform 2 are expressed in prostate and testis. Isoform 2 is expressed in male and female brain at equivalent levels, in particular in cerebellum, cerebral cortex, corpus callosum, occipital, parrietal and temporal lobes, and pons, but not in amygdala, cerebral peduncle, hippocampus and thalamus.

Its subcellular location is the secreted. The polypeptide is Prostate and testis expressed protein 2 (PATE2) (Homo sapiens (Human)).